A 194-amino-acid chain; its full sequence is Crossover junction endodeoxyribonuclease RuvC (194 aa).

Catalysis depends on residues D7, E68, and D141. D7, E68, and D141 together coordinate Mg(2+). Positions 162–194 (GGEREQHLTAAQRQWAEAAQNSTRRRKNSDRGM) are disordered. The span at 184 to 194 (TRRRKNSDRGM) shows a compositional bias: basic residues.

The protein belongs to the RuvC family. Homodimer which binds Holliday junction (HJ) DNA. The HJ becomes 2-fold symmetrical on binding to RuvC with unstacked arms; it has a different conformation from HJ DNA in complex with RuvA. In the full resolvosome a probable DNA-RuvA(4)-RuvB(12)-RuvC(2) complex forms which resolves the HJ. The cofactor is Mg(2+).

It localises to the cytoplasm. The enzyme catalyses Endonucleolytic cleavage at a junction such as a reciprocal single-stranded crossover between two homologous DNA duplexes (Holliday junction).. Functionally, the RuvA-RuvB-RuvC complex processes Holliday junction (HJ) DNA during genetic recombination and DNA repair. Endonuclease that resolves HJ intermediates. Cleaves cruciform DNA by making single-stranded nicks across the HJ at symmetrical positions within the homologous arms, yielding a 5'-phosphate and a 3'-hydroxyl group; requires a central core of homology in the junction. The consensus cleavage sequence is 5'-(A/T)TT(C/G)-3'. Cleavage occurs on the 3'-side of the TT dinucleotide at the point of strand exchange. HJ branch migration catalyzed by RuvA-RuvB allows RuvC to scan DNA until it finds its consensus sequence, where it cleaves and resolves the cruciform DNA. This chain is Crossover junction endodeoxyribonuclease RuvC, found in Bifidobacterium longum subsp. infantis (strain ATCC 15697 / DSM 20088 / JCM 1222 / NCTC 11817 / S12).